A 411-amino-acid chain; its full sequence is Inhibin beta B chain (411 aa).

An N-terminal signal peptide occupies residues 1 to 28 (MDGLPGRALGAACLLLLVAGWLGPEAWG). The interval 28–69 (GSPTPPPSPAAPPPPPPPGAPGGSQDTCTSCGGGGGGFRRPE) is disordered. The propeptide occupies 29 to 296 (SPTPPPSPAA…GDSRHRIRKR (268 aa)). Over residues 30–47 (PTPPPSPAAPPPPPPPGA) the composition is skewed to pro residues. N97 carries N-linked (GlcNAc...) asparagine glycosylation. 4 disulfide bridges follow: C300–C308, C307–C376, C336–C408, and C340–C410.

The protein belongs to the TGF-beta family. Dimeric, linked by one or more disulfide bonds. Inhibin B is a dimer of alpha and beta-B. Activin B is a homodimer of beta-B. Activin AB is a dimer of beta-A and beta-B. Interacts with FST and FSTL3. Activin B interacts with BMPR2. As to expression, uterus, testis, ovary, lung, kidney, brain, CJ7 embryonic stem cells, and possibly in liver.

The protein localises to the secreted. Inhibins and activins inhibit and activate, respectively, the secretion of follitropin by the pituitary gland. Inhibins/activins are involved in regulating a number of diverse functions such as hypothalamic and pituitary hormone secretion, gonadal hormone secretion, germ cell development and maturation, erythroid differentiation, insulin secretion, nerve cell survival, embryonic axial development or bone growth, depending on their subunit composition. Inhibins appear to oppose the functions of activins. Its function is as follows. Activin B is a dimer of alpha and beta-B that plays a role in several essential biological processes including embryonic development, stem cell maintenance and differentiation, haematopoiesis, cell proliferation and wound healing. Signals through type I receptor ACVR1C, abundantly expressed in pancreatic beta cells, and type II receptors like ACVR2A. Upon ligand binding, these receptors phosphorylate intracellular signaling mediators SMAD2 and SMAD3, which form a complex with SMAD4, translocate to the nucleus, and regulate gene expression. Plays a crucial role in the induction of hepcidin by inflammation through activation of ACVR1C and subsequent phosphorylation of SMAD1/5/8. Regulates adipocyte lipid metabolism by decreasing non-esterified fatty acids and glycerol release and increases intracellular triglyceride content. Stimulates wound healing by promoting cell migration and hair follicle regeneration through the JNK and ERK signaling pathways downstream of RHOA. In terms of biological role, inhibin B is a dimer of alpha and beta-B that plays a crucial role in the regulation of the reproductive system by inhibiting the secretion of follicle-stimulating hormone (FSH) from the anterior pituitary gland. Thereby, maintains reproductive homeostasis in both males and females. Acts as a more potent suppressor of FSH release than inhibin A. Functions as competitive receptor antagonist binding activin type II receptors with high affinity in the presence of the TGF-beta type III coreceptor/TGFBR3L. This chain is Inhibin beta B chain (Inhbb), found in Mus musculus (Mouse).